Reading from the N-terminus, the 247-residue chain is Cell division protein ZapD (247 aa).

Belongs to the ZapD family. Interacts with FtsZ.

The protein resides in the cytoplasm. Cell division factor that enhances FtsZ-ring assembly. Directly interacts with FtsZ and promotes bundling of FtsZ protofilaments, with a reduction in FtsZ GTPase activity. The chain is Cell division protein ZapD from Erwinia tasmaniensis (strain DSM 17950 / CFBP 7177 / CIP 109463 / NCPPB 4357 / Et1/99).